A 70-amino-acid polypeptide reads, in one-letter code: Putative membrane protein insertion efficiency factor (70 aa).

It belongs to the UPF0161 family.

Its subcellular location is the cell membrane. Functionally, could be involved in insertion of integral membrane proteins into the membrane. The sequence is that of Putative membrane protein insertion efficiency factor from Lachnoclostridium phytofermentans (strain ATCC 700394 / DSM 18823 / ISDg) (Clostridium phytofermentans).